Reading from the N-terminus, the 456-residue chain is Gamma-aminobutyric acid receptor subunit alpha-1 (456 aa).

An N-terminal signal peptide occupies residues M1–G27. Topologically, residues Q28–F253 are extracellular. Residue N38 is glycosylated (N-linked (GlcNAc...) asparagine). Position 94 (R94) interacts with 4-aminobutanoate. N-linked (GlcNAc...) asparagine glycosylation is present at N138. T157 is a binding site for 4-aminobutanoate. C166 and C180 are disulfide-bonded. A helical transmembrane segment spans residues V254–L274. At N275–V279 the chain is on the cytoplasmic side. The helical transmembrane segment at P280–R301 threads the bilayer. The Extracellular segment spans residues N302–T311. Residues A312–T333 traverse the membrane as a helical segment. Over V334 to R421 the chain is Cytoplasmic. The chain crosses the membrane as a helical span at residues L422 to T441. Topologically, residues Y442–Q456 are extracellular.

It belongs to the ligand-gated ion channel (TC 1.A.9) family. Gamma-aminobutyric acid receptor (TC 1.A.9.5) subfamily. GABRA1 sub-subfamily. As to quaternary structure, heteropentamer, formed by a combination of alpha (GABRA1-6), beta (GABRB1-3), gamma (GABRG1-3), delta (GABRD), epsilon (GABRE), rho (GABRR1-3), pi (GABRP) and theta (GABRQ) subunits, each subunit exhibiting distinct physiological and pharmacological properties. Interacts with UBQLN1. Interacts with TRAK1. Interacts with KIF21B. Identified in a complex of 720 kDa composed of LHFPL4, NLGN2, GABRA1, GABRB2, GABRG2 and GABRB3. Interacts with LHFPL4. Interacts with NLGN2. Interacts with SHISA7; interaction leads to the regulation of GABA(A) receptor trafficking, channel deactivation kinetics and pharmacology. In terms of tissue distribution, cerebellar granule cells, Purkinje cells and stellate/basket cells.

It is found in the postsynaptic cell membrane. The protein localises to the cell membrane. It localises to the cytoplasmic vesicle membrane. It catalyses the reaction chloride(in) = chloride(out). Its activity is regulated as follows. Allosterically activated by benzodiazepines, the neuroanesthetic alphaxalone and pentobarbital. Inhibited by the antagonist bicuculline. Potentiated by histamine. Functionally, alpha subunit of the heteropentameric ligand-gated chloride channel gated by gamma-aminobutyric acid (GABA), a major inhibitory neurotransmitter in the brain. GABA-gated chloride channels, also named GABA(A) receptors (GABAAR), consist of five subunits arranged around a central pore and contain GABA active binding site(s) located at the alpha and beta subunit interface(s). When activated by GABA, GABAARs selectively allow the flow of chloride anions across the cell membrane down their electrochemical gradient. Alpha-1/GABRA1-containing GABAARs are largely synaptic. Chloride influx into the postsynaptic neuron following GABAAR opening decreases the neuron ability to generate a new action potential, thereby reducing nerve transmission. GABAARs containing alpha-1 and beta-2 or -3 subunits exhibit synaptogenic activity; the gamma-2 subunit being necessary but not sufficient to induce rapid synaptic contacts formation. GABAARs function also as histamine receptor where histamine binds at the interface of two neighboring beta subunits and potentiates GABA response. GABAARs containing alpha, beta and epsilon subunits also permit spontaneous chloride channel activity while preserving the structural information required for GABA-gated openings. Alpha-1-mediated plasticity in the orbitofrontal cortex regulates context-dependent action selection. Together with rho subunits, may also control neuronal and glial GABAergic transmission in the cerebellum. The polypeptide is Gamma-aminobutyric acid receptor subunit alpha-1 (GABRA1) (Bos taurus (Bovine)).